The following is a 500-amino-acid chain: MLNVNFVNEASSTNQGLVVFIDEQLKLDSNLIGLDQQHHGLISKTIQNKLQFTGKYGQIKVIPSVIKSGEVRYLIIAGLGNEEKLTEAKIEELGGKILQHATSCKISTIGLKITNRISRFTSQTFASLVASGAFLASYRFDKYRTTLKEAEKFAVESIEIFTDNSTETAKLFEIKKLIAEAVFFTRDISNEPSNIKTPQVYAERIVDRLEPLGVDVDVIGEREMKNLGMGALLGVGQGSQNESKLVVMEYKGGSKDVPTIALVGKGVIFDTGGISLKPSSDMHLMRYDMGGSAAVVGTIIAVAGQKLPVNIVGVVGLVENMLSGNAQRPGDVVTTMSGQTAEVLNTDAEGRLVLADAVWYAQEKFKPKCVIDVATLTGAITIALGNTYAGCFSNNDELADKLIKVGEEVNEKLWRMPLHDEYDAMIHSDIADMANIANVPRAAGSCIAAHFIKRFIKDGVDWAHLDIAGVANSNKASALGPKGAVGYGVRLLEKFIKEYT.

Positions 265 and 270 each coordinate Mn(2+). Residue lysine 277 is part of the active site. Residues aspartate 288, aspartate 347, and glutamate 349 each contribute to the Mn(2+) site. Arginine 351 is an active-site residue.

This sequence belongs to the peptidase M17 family. Mn(2+) serves as cofactor.

The protein resides in the cytoplasm. It carries out the reaction Release of an N-terminal amino acid, Xaa-|-Yaa-, in which Xaa is preferably Leu, but may be other amino acids including Pro although not Arg or Lys, and Yaa may be Pro. Amino acid amides and methyl esters are also readily hydrolyzed, but rates on arylamides are exceedingly low.. The catalysed reaction is Release of an N-terminal amino acid, preferentially leucine, but not glutamic or aspartic acids.. Functionally, presumably involved in the processing and regular turnover of intracellular proteins. Catalyzes the removal of unsubstituted N-terminal amino acids from various peptides. This is Probable cytosol aminopeptidase from Rickettsia rickettsii (strain Iowa).